The primary structure comprises 207 residues: MMRGGPGTPSALQMLIEALRVLPGVGPKSAQRMAYHLLQHDREGASRLAEALAEAAESIHHCSRCNTFTEQDVCETCLDPRRDASVLCVVETPADQMMIEQTLTYRGQYFVLMGRLSPLDNIGPKEIHLERLLARATDPALGGPCAEVILATNFTSEGEATAHYIGEMLKARGIKVSRLARGVPVGGELEYVDAGTIARAVLDRRQL.

Residues 62-77 form a C4-type zinc finger; it reads CSRCNTFTEQDVCETC. A Toprim domain is found at 85–184; that stretch reads SVLCVVETPA…KVSRLARGVP (100 aa).

The protein belongs to the RecR family.

In terms of biological role, may play a role in DNA repair. It seems to be involved in an RecBC-independent recombinational process of DNA repair. It may act with RecF and RecO. This Ralstonia nicotianae (strain ATCC BAA-1114 / GMI1000) (Ralstonia solanacearum) protein is Recombination protein RecR.